A 517-amino-acid polypeptide reads, in one-letter code: Ribonuclease Y (517 aa).

A helical transmembrane segment spans residues 1–21 (MIESLIALIAAIVGLGIGYLV). The region spanning 207-273 (LINVINIKND…TKVIELLVED (67 aa)) is the KH domain. Positions 333-426 (ALAHSLEVAH…VCAADTLSAA (94 aa)) constitute an HD domain.

Belongs to the RNase Y family.

The protein resides in the cell membrane. In terms of biological role, endoribonuclease that initiates mRNA decay. This chain is Ribonuclease Y, found in Campylobacter jejuni subsp. jejuni serotype O:6 (strain 81116 / NCTC 11828).